Here is a 273-residue protein sequence, read N- to C-terminus: Undecaprenyl-diphosphatase (273 aa).

Helical transmembrane passes span 4–24 (IELLKVIFLGIVEGITEWLPI), 45–65 (FMSMFNVVIQLGAILAVVVLF), 84–104 (TFTLWFKIVVACIPGIVMIPF), 112–132 (FFNPQTIATTLILYGILFIII), 149–169 (ITYQMAFMIGLFQILAMIPGT), 187–207 (YVAAEFTFFLAIPTMFGASLL), 219–239 (AEIVALITGMLTAFIVSIIVI), and 251–271 (FKVFGWYRIVLGAIVAGYFLL).

Belongs to the UppP family.

It localises to the cell membrane. The enzyme catalyses di-trans,octa-cis-undecaprenyl diphosphate + H2O = di-trans,octa-cis-undecaprenyl phosphate + phosphate + H(+). Catalyzes the dephosphorylation of undecaprenyl diphosphate (UPP). Confers resistance to bacitracin. The protein is Undecaprenyl-diphosphatase of Lachnoclostridium phytofermentans (strain ATCC 700394 / DSM 18823 / ISDg) (Clostridium phytofermentans).